A 1061-amino-acid chain; its full sequence is Calcium-transporting ATPase 4, endoplasmic reticulum-type (1061 aa).

The disordered stretch occupies residues Met1 to Ser21. Over Met1 to Ser70 the chain is Cytoplasmic. The chain crosses the membrane as a helical span at residues Ile71 to Ala91. Residues Val92–Glu115 are Lumenal-facing. Residues Pro116 to Thr135 form a helical membrane-spanning segment. Residues Asn136–Leu278 lie on the Cytoplasmic side of the membrane. Residues Asn279 to Leu298 form a helical membrane-spanning segment. Residues Ile299 to Tyr327 are Lumenal-facing. A helical membrane pass occupies residues Phe328–Ala345. Positions 336, 337, 339, and 341 each coordinate Ca(2+). At Val346–Met786 the chain is on the cytoplasmic side. Catalysis depends on Asp383, which acts as the 4-aspartylphosphate intermediate. Residues Asp731 and Asp735 each coordinate Mg(2+). Residues Lys787–Leu806 form a helical membrane-spanning segment. Ca(2+)-binding residues include Asn797 and Glu800. The Lumenal segment spans residues Thr807–Met816. A helical membrane pass occupies residues Ile817–Gly837. 3 residues coordinate Ca(2+): Asn825, Thr828, and Asp829. Topologically, residues Phe838–Leu857 are cytoplasmic. A helical membrane pass occupies residues Ile858–Val880. Topologically, residues Phe881–Ser950 are lumenal. A helical membrane pass occupies residues Thr951 to Ser970. Glu961 is a binding site for Ca(2+). The Cytoplasmic portion of the chain corresponds to Glu971–Asn983. The chain crosses the membrane as a helical span at residues Pro984–Tyr1002. Residues Val1003 to Leu1017 lie on the Lumenal side of the membrane. The chain crosses the membrane as a helical span at residues Asn1018–Lys1038. Residues Phe1039 to Glu1061 are Cytoplasmic-facing.

It belongs to the cation transport ATPase (P-type) (TC 3.A.3) family. Type IIA subfamily.

Its subcellular location is the membrane. The enzyme catalyses Ca(2+)(in) + ATP + H2O = Ca(2+)(out) + ADP + phosphate + H(+). Its function is as follows. This magnesium-dependent enzyme catalyzes the hydrolysis of ATP coupled with the translocation of calcium from the cytosol to an endomembrane compartment. This Arabidopsis thaliana (Mouse-ear cress) protein is Calcium-transporting ATPase 4, endoplasmic reticulum-type (ECA4).